The sequence spans 370 residues: Anhydro-N-acetylmuramic acid kinase (370 aa).

12-19 (GTSLDGVD) lines the ATP pocket.

The protein belongs to the anhydro-N-acetylmuramic acid kinase family.

It carries out the reaction 1,6-anhydro-N-acetyl-beta-muramate + ATP + H2O = N-acetyl-D-muramate 6-phosphate + ADP + H(+). It participates in amino-sugar metabolism; 1,6-anhydro-N-acetylmuramate degradation. The protein operates within cell wall biogenesis; peptidoglycan recycling. Functionally, catalyzes the specific phosphorylation of 1,6-anhydro-N-acetylmuramic acid (anhMurNAc) with the simultaneous cleavage of the 1,6-anhydro ring, generating MurNAc-6-P. Is required for the utilization of anhMurNAc either imported from the medium or derived from its own cell wall murein, and thus plays a role in cell wall recycling. The sequence is that of Anhydro-N-acetylmuramic acid kinase from Proteus mirabilis (strain HI4320).